Consider the following 880-residue polypeptide: MEGGGKPNSSSNSRDDGNSVFPAKAPATGAGPAAAEKRLGTPPGGGGAGAKEHGNSVCFKVDGGGGGGEESAGGLEDAEGPRRQYGFMQRQFTSMLQPGVNKFSLRMFGSQKAVEKEQERVKTAGFWIIHSYSDFRFYWDLIMLIMMVGNLVIIPVGITFFTEQTTTPWIIFNVASDTVFLLDLIMNFRTGTVNEDSSEIILDPKVIKMNYLKSWFVVDFISSIPVDYIFLIVEKGMDSEVYKTARALRIVRFTKILSLLRLLRLSRLIRYIHQWEEIFHMTYDLASAVVRIFNLIGMMLLLCHWDGCLQFLVPLLQDFPPDCWVSLNEMVNDSWGKQYSYALFKAMSHMLCIGYGAQAPVSMSDLWITMLSMIVGATCYAMFVGHATALIQSLDSSRRQYQEKYKQVEQYMSFHKLPADMRQKIHDYYEHRYQGKIFDEENILNELNDPLREEIVNFNCRKLVATMPLFANADPNFVTAMLSKLRFEVFQPGDYIIREGAVGKKMYFIQHGVAGVITKSSKEMKLTDGSYFGEICLLTKGRRTASVRADTYCRLYSLSVDNFNEVLEEYPMMRRAFETVAIDRLDRIGKKNSILLQKFQKDLNTGVFNNQENEILKQIVKHDREMVQAIAPISYPQMTALNSTSSTATPTSRMRTQSPPVYTATSLSHSNLHSPSPSTQTPQPSAILSPCSYTTAVCSPPVQSPLATRTFHYASPTASQLSLMPQQQQQPQAPQTQPQQPPQQPQTPGSATPKNEVHRSTQALPNTSLTREVRPLSASQPSLPHEVSTLISRPHPTVGESLASIPQPVAAVHSAGLQAAGRSTVPQRVTLFRQMSSGAIPPNRGVPPAPPPPAAPLQREASSVLNTDPEAEKPRFASNL.

A disordered region spans residues Met1–Gly80. Over Met1–Arg136 the chain is Cytoplasmic. The span at Asn8–Ala34 shows a compositional bias: low complexity. Gly residues predominate over residues Asp62–Ser71. Residues Phe137–Ile158 form a helical membrane-spanning segment. The Extracellular segment spans residues Thr159 to Thr167. A helical membrane pass occupies residues Pro168–Phe188. The Cytoplasmic portion of the chain corresponds to Arg189–Met209. A helical transmembrane segment spans residues Asn210–Phe230. Residues Leu231–Thr254 are Extracellular-facing. Residues Lys255–Trp275 form a helical; Voltage-sensor membrane-spanning segment. At Glu276–Val289 the chain is on the cytoplasmic side. A helical membrane pass occupies residues Val290–Leu312. Over Val313–Gln338 the chain is Extracellular. Asn332 carries an N-linked (GlcNAc...) asparagine glycan. The pore-forming intramembrane region spans Tyr339 to Pro360. The Selectivity filter motif lies at Cys352–Gly356. Residues Val361–Asp365 lie on the Extracellular side of the membrane. Residues Leu366–His386 traverse the membrane as a helical segment. Residues Ala387–Leu880 lie on the Cytoplasmic side of the membrane. Residues Gly533, Glu534, Cys536, Arg543, Thr544, Arg584, and Arg587 each coordinate 3',5'-cyclic AMP. Polar residues predominate over residues Leu641 to Ala664. Disordered stretches follow at residues Leu641–Ala686, Ala718–Glu786, and Met835–Leu880. 2 stretches are compositionally biased toward low complexity: residues Thr665–Ser685 and Pro725–Pro738. The span at Ser760–Thr770 shows a compositional bias: polar residues. Positions Arg844–Ala855 are enriched in pro residues. Residues Glu870 to Leu880 show a composition bias toward basic and acidic residues.

Belongs to the potassium channel HCN family. Homotetramer. Heterotetramer with HCN2. The potassium channel is composed of a homo- or heterotetrameric complex of pore-forming subunits. Interacts with KCNE2. Interacts with the SH3 domain of CSK. In terms of tissue distribution, detected in myocytes in heart sinoatrial node (SAN) and in brain, in particular in the granule cell layer and in Purkinje neuron bodies in the cerebellum.

It localises to the cell membrane. The catalysed reaction is Na(+)(in) = Na(+)(out). The enzyme catalyses K(+)(in) = K(+)(out). Activated by cAMP. cAMP binding promotes tetramerization and formation of an active channel. Compared to other family members, cAMP has less stimulatory effect on HCN1 because part of the molecules already contain bound cAMP and form homotetramers when cAMP levels are low, this inherent tetramerization in HCN1 results in a weaker response to increased cAMP. Functionally, hyperpolarization-activated ion channel that are permeable to sodium and potassium ions. Exhibits weak selectivity for potassium over sodium ions. Contributes to the native pacemaker currents in heart (If) and in neurons (Ih). Participates in cerebellar mechanisms of motor learning. May mediate responses to sour stimuli. This chain is Potassium/sodium hyperpolarization-activated cyclic nucleotide-gated channel 1 (HCN1), found in Oryctolagus cuniculus (Rabbit).